The following is a 1275-amino-acid chain: Mediator of RNA polymerase II transcription subunit 33B (1275 aa).

The span at 772 to 791 (GSQSLTPSSGSSSLSTSGGD) shows a compositional bias: low complexity. Residues 772-792 (GSQSLTPSSGSSSLSTSGGDD) are disordered.

This sequence belongs to the Mediator complex subunit 33 family. As to quaternary structure, component of the Mediator complex. As to expression, ubiquitous.

It is found in the nucleus. In terms of biological role, component of the Mediator complex, a coactivator involved in the regulated transcription of nearly all RNA polymerase II-dependent genes. Mediator functions as a bridge to convey information from gene-specific regulatory proteins to the basal RNA polymerase II transcription machinery. The Mediator complex, having a compact conformation in its free form, is recruited to promoters by direct interactions with regulatory proteins and serves for the assembly of a functional preinitiation complex with RNA polymerase II and the general transcription factors. Involved in the repression of phenylpropanoid biosynthesis. May compete with MED33B for common binding partners or for occupancy in Mediator. This Arabidopsis thaliana (Mouse-ear cress) protein is Mediator of RNA polymerase II transcription subunit 33B (MED33B).